Consider the following 892-residue polypeptide: MEINHDYRVKLFDELSFERKQCTECNQWFWTLDKDRTTCGDSPCDEYSFIGSPITSKKYTYNEMVKEFTNFFAEKGHSPVKRSPVVAKRWRDDILLTIASIAVFQPWVTNGLVKPVKNPLVIAQPCIRLNDIDNVGRTGRHLTCFTMGAHHAFNSKDEYKYWTDKTVEYCFELMQRLGIDGKTITFIESWWEGGGNAGPCYEVITHGVELATLVFMQYKKVGNDYEEIPLKIVDTGYGIERFAWASQGTPTVYESLFSEIIEKLKEDAGIPEVDEKIMAESATLAGLMDIENVGDLRVLRQKVAEKIGMDVDELDKLISPLEYIYAIADHTRCLSFMFGDGIVPSNVKEGYLARLVLRKTLRYMEKIGISMSIKDIIAMQLENMKEIYPELSEMKEYVMDVLDAEEKKYIQTVNRGRGIVERMAASKSEITLDDLIELYDSNGLPPEIVKDVVDELNKKGKKTIAITVPDNFYTIVAERHEEEKPEEVVSTKKELPELEVSETELLFFKHPTQAEFEAKILKIAEKYVVLDKTLFYAEGGGQKYDIGQLNDIEVSDVQKKNGIVFHKVSDISKFKEGDTVKGTLNWENRLKLMRNHTATHVINAAATRVLGKHIWQTGSNVDTEKGRLDITHYERISREQVKEIERIANEMVLSKMPVNSTFMDRNDAEQKYGFTIYQGGVVPGDTLRIIEIEETDVEACGGTHCSNTSEVGYIKVLKTERIQDGVERLEYSTGMGSVSEIAIIEDTLIDSAEILGIPNDQLPKTVKRFFEEWKEQKKTIEELQKKVGELVKYELADKFEKVGDYEVLVEQVSGTPNELMSIADNLAVGNKLIVLMNESDYLLCKRGENVELSMKELIRNIGKGGGKDNLAQGKYSETKEQITEKISQILNK.

4 residues coordinate Zn(2+): histidine 596, histidine 600, cysteine 700, and histidine 704.

The protein belongs to the class-II aminoacyl-tRNA synthetase family. The cofactor is Zn(2+).

Its subcellular location is the cytoplasm. The enzyme catalyses tRNA(Ala) + L-alanine + ATP = L-alanyl-tRNA(Ala) + AMP + diphosphate. Catalyzes the attachment of alanine to tRNA(Ala) in a two-step reaction: alanine is first activated by ATP to form Ala-AMP and then transferred to the acceptor end of tRNA(Ala). Also edits incorrectly charged Ser-tRNA(Ala) and Gly-tRNA(Ala) via its editing domain. The polypeptide is Alanine--tRNA ligase (Methanococcus maripaludis (strain C6 / ATCC BAA-1332)).